Reading from the N-terminus, the 316-residue chain is MTKEFHHITVLLHETVDMLDIKPDGIYVDATLGGAGHSSYLLSKLNDNGHLYCFDQDQKAIDNAQVFLKSYVDRGMVTFIKANFRHLKSELNALGVTEIDGILYDLGVSSPQLDERERGFSYKQDAPLDMRMDSDAALTAYHVVNDYPFQDLVRIFFKYGEDKFSKQIARKIEQARAIKPIETTAELAEIIKSAKPAKELKKKGHPAKQIFQAIRIEVNDELGAADESIQEAMTMLALNGRISVITFHSLEDRLTKQLFKEASTVDVPKGIPFIPEDMQPKFELVTRKPILPSQEELLANNRAHSAKLRVARKVRM.

S-adenosyl-L-methionine contacts are provided by residues Ala-35–His-37, Asp-55, Phe-84, Asp-105, and Gln-112.

It belongs to the methyltransferase superfamily. RsmH family.

Its subcellular location is the cytoplasm. It catalyses the reaction cytidine(1402) in 16S rRNA + S-adenosyl-L-methionine = N(4)-methylcytidine(1402) in 16S rRNA + S-adenosyl-L-homocysteine + H(+). In terms of biological role, specifically methylates the N4 position of cytidine in position 1402 (C1402) of 16S rRNA. This is Ribosomal RNA small subunit methyltransferase H from Streptococcus uberis (strain ATCC BAA-854 / 0140J).